The following is a 1216-amino-acid chain: DNA-directed RNA polymerase subunit beta' (1216 aa).

Zn(2+) is bound by residues cysteine 60, cysteine 62, cysteine 75, and cysteine 78. The Mg(2+) site is built by aspartate 450, aspartate 452, and aspartate 454. Residues cysteine 819, cysteine 893, cysteine 900, and cysteine 903 each coordinate Zn(2+).

It belongs to the RNA polymerase beta' chain family. As to quaternary structure, the RNAP catalytic core consists of 2 alpha, 1 beta, 1 beta' and 1 omega subunit. When a sigma factor is associated with the core the holoenzyme is formed, which can initiate transcription. It depends on Mg(2+) as a cofactor. Zn(2+) is required as a cofactor.

It catalyses the reaction RNA(n) + a ribonucleoside 5'-triphosphate = RNA(n+1) + diphosphate. Functionally, DNA-dependent RNA polymerase catalyzes the transcription of DNA into RNA using the four ribonucleoside triphosphates as substrates. This Streptococcus agalactiae serotype Ia (strain ATCC 27591 / A909 / CDC SS700) protein is DNA-directed RNA polymerase subunit beta'.